We begin with the raw amino-acid sequence, 398 residues long: Rhizopuspepsin-4 (398 aa).

An N-terminal signal peptide occupies residues 1–21 (MKFTLISSCVALACMALAVEA). Residues 22 to 74 (APSGKKINVPLSKNANYKPNAKRAIEKANAKYARFRSSSSSSSSSSCGSAGTE) constitute a propeptide, activation peptide. Low complexity predominate over residues 58–78 (SSSSSSSSSSCGSAGTESSGS). Positions 58-83 (SSSSSSSSSSCGSAGTESSGSVPVTD) are disordered. Positions 90-394 (YYGEVTVGTP…NPQVPQVQIA (305 aa)) constitute a Peptidase A1 domain. Asp-108 is a catalytic residue. Cysteines 121 and 124 form a disulfide. Asp-291 is a catalytic residue. Cys-325 and Cys-358 form a disulfide bridge.

Belongs to the peptidase A1 family.

The enzyme catalyses Hydrolysis of proteins with broad specificity similar to that of pepsin A, preferring hydrophobic residues at P1 and P1'. Clots milk and activates trypsinogen. Does not cleave 4-Gln-|-His-5, but does cleave 10-His-|-Leu-11 and 12-Val-|-Glu-13 in B chain of insulin.. This chain is Rhizopuspepsin-4, found in Rhizopus niveus.